A 296-amino-acid polypeptide reads, in one-letter code: 4-hydroxy-tetrahydrodipicolinate synthase (296 aa).

Threonine 49 contacts pyruvate. Tyrosine 137 (proton donor/acceptor) is an active-site residue. Lysine 165 functions as the Schiff-base intermediate with substrate in the catalytic mechanism. Isoleucine 207 contributes to the pyruvate binding site.

It belongs to the DapA family. In terms of assembly, homotetramer; dimer of dimers.

The protein localises to the cytoplasm. The enzyme catalyses L-aspartate 4-semialdehyde + pyruvate = (2S,4S)-4-hydroxy-2,3,4,5-tetrahydrodipicolinate + H2O + H(+). The protein operates within amino-acid biosynthesis; L-lysine biosynthesis via DAP pathway; (S)-tetrahydrodipicolinate from L-aspartate: step 3/4. Its function is as follows. Catalyzes the condensation of (S)-aspartate-beta-semialdehyde [(S)-ASA] and pyruvate to 4-hydroxy-tetrahydrodipicolinate (HTPA). This is 4-hydroxy-tetrahydrodipicolinate synthase from Afipia carboxidovorans (strain ATCC 49405 / DSM 1227 / KCTC 32145 / OM5) (Oligotropha carboxidovorans).